A 913-amino-acid polypeptide reads, in one-letter code: MGDSRDLCPHLDSIGEVTKEDLLLKSMGTCQSCGVTGPNLWACLQVACPYVGCGESFADHSTIHAQAKKHNLTVNLTTFRLWCYACEKEVFLEQRLAAPLLGSSKFSEQDSPPPSHPLKAVPIAVADEGESESEDDDLKPRGLTGMKNLGNSCYMNAALQALSNCPPLTQFFLECGGLVRTDKKPALCKSYQKLVSEVWHKKRPSYVVPTSLSHGIKLVNPMFRGYAQQDTQEFLRCLMDQLHEELKEPVVATVALTEARDSDSSDTDEKREGDRSPSEDEFLSCDSSSDRGEGDGQGRGGGSSQAETELLIPDEASRAISEKERMKDRKFSWGQQRTNSEQVDEDADVDTTMAALDDQPAEAQPPSPRSSSPCRTPEPDNDAHLCSSSRPCSPVHHHEGHAKLSSSPPRASPVRMAPSYVLKKAQVLSAGSRRRKEQRYRSVISDIFDGSILSLVQCLTCDRVSATVETFQDLSLPIPGKEDLAKLHSAIYQNVPAKPGTCGDSYAAQGWLAFIVEYIRRFVVSCTPSWFWGPVVTLEDCLAAFFAADELKGDNMYSCERCKKLRNGVKYCKVLRLPEILCIHLKRFRHEVMYSFKINSHVSFPLEGLDLRPFLAKECTSQITTYDLLSVICHHGTAGSGHYIAYCQNVINGQWYEFDDQYVTEVHETVVQNAEGYVLFYRKSSEEAVRERQQVVSLAAMREPSLLRFYVSREWLNKFNTFAEPGPITNQTFLCSHGGIPPHKYHYIDDLVVILPQNVWEHLYNRFGGGPAVNHLYVCSICQVEIEALAKRRRIEIDTFIKLNKAFQAEESPGIIYCISMQWFREWEAFVKGKDNEPPGPIDNSRIAQVKGSGHVQLKQGADYGQISEETWTYLNSLYGGGPEIAIRQSVAQPLGPESLHGEQKIEAEARAV.

Residues 6-111 (DLCPHLDSIG…GSSKFSEQDS (106 aa)) form a UBP-type zinc finger. The Zn(2+) site is built by Cys-8, His-10, Cys-30, Cys-33, Cys-43, Cys-48, Cys-53, His-60, His-64, His-70, Cys-83, and Cys-86. Residues Ser-111, Ser-131, and Ser-133 each carry the phosphoserine modification. Residues 144 to 684 (TGMKNLGNSC…EGYVLFYRKS (541 aa)) enclose the USP domain. Residue Cys-153 is the Nucleophile of the active site. Residues 256 to 414 (LTEARDSDSS…SSSPPRASPV (159 aa)) are disordered. Thr-257 carries the phosphothreonine modification. Residues 258 to 278 (EARDSDSSDTDEKREGDRSPS) are compositionally biased toward basic and acidic residues. Ser-304 bears the Phosphoserine mark. Positions 315-331 (EASRAISEKERMKDRKF) are enriched in basic and acidic residues. Ser-367 is modified (phosphoserine). Residue Thr-376 is modified to Phosphothreonine. Residues Ser-407 and Ser-412 each carry the phosphoserine modification. The active-site Proton acceptor is His-642. DUSP domains are found at residues 686–779 (EEAV…LYVC) and 788–891 (ALAK…RQSV).

The protein belongs to the peptidase C19 family. USP20/USP33 subfamily. Interacts with VHL, leading to its ubiquitination and subsequent degradation. Interacts with CCP110. Interacts with DIO2. Interacts with HIF1A. Interacts with ADRB2. Interacts with USP18. Ubiquitinated via a VHL-dependent pathway for proteasomal degradation.

It localises to the cytoplasm. The protein resides in the endoplasmic reticulum. The protein localises to the perinuclear region. It is found in the cytoskeleton. Its subcellular location is the microtubule organizing center. It localises to the centrosome. It carries out the reaction Thiol-dependent hydrolysis of ester, thioester, amide, peptide and isopeptide bonds formed by the C-terminal Gly of ubiquitin (a 76-residue protein attached to proteins as an intracellular targeting signal).. In terms of biological role, deubiquitinating enzyme that plays a role in many cellular processes including autophagy, cellular antiviral response or membrane protein biogenesis. Attenuates TLR4-mediated NF-kappa-B signaling by cooperating with beta-arrestin-2/ARRB2 and inhibiting TRAF6 autoubiquitination. Promotes cellular antiviral responses by deconjugating 'Lys-33' and 'Lys-48'-linked ubiquitination of STING1 leading to its stabilization. Plays an essential role in autophagy induction by regulating the ULK1 stability through deubiquitination of ULK1. Acts as a positive regulator for NF-kappa-B activation by TNF-alpha through deubiquitinating 'Lys-48'-linked polyubiquitination of SQSTM1, leading to its increased stability. Acts as a regulator of G-protein coupled receptor (GPCR) signaling by mediating the deubiquitination beta-2 adrenergic receptor (ADRB2). Plays a central role in ADRB2 recycling and resensitization after prolonged agonist stimulation by constitutively binding ADRB2, mediating deubiquitination of ADRB2 and inhibiting lysosomal trafficking of ADRB2. Upon dissociation, it is probably transferred to the translocated beta-arrestins, possibly leading to beta-arrestins deubiquitination and disengagement from ADRB2. This suggests the existence of a dynamic exchange between the ADRB2 and beta-arrestins. Deubiquitinates DIO2, thereby regulating thyroid hormone regulation. Deubiquitinates HIF1A, leading to stabilize HIF1A and enhance HIF1A-mediated activity. Deubiquitinates MCL1, a pivotal member of the anti-apoptotic Bcl-2 protein family to regulate its stability. Within the endoplasmic reticulum, participates with USP33 in the rescue of post-translationally targeted membrane proteins that are inappropriately ubiquitinated by the cytosolic protein quality control in the cytosol. This is Ubiquitin carboxyl-terminal hydrolase 20 (USP20) from Pongo abelii (Sumatran orangutan).